Consider the following 441-residue polypeptide: Na(+)/H(+) antiporter NhaA 2 (441 aa).

The next 12 helical transmembrane spans lie at valine 34–tryptophan 54, leucine 77–leucine 97, alanine 115–valine 135, glycine 146–serine 166, phenylalanine 176–tyrosine 196, glutamate 199–valine 219, serine 225–valine 245, valine 249–proline 269, valine 290–leucine 310, proline 317–threonine 337, tryptophan 355–isoleucine 375, and phenylalanine 389–leucine 409.

The protein belongs to the NhaA Na(+)/H(+) (TC 2.A.33) antiporter family.

Its subcellular location is the cell membrane. The enzyme catalyses Na(+)(in) + 2 H(+)(out) = Na(+)(out) + 2 H(+)(in). Its function is as follows. Na(+)/H(+) antiporter that extrudes sodium in exchange for external protons. The sequence is that of Na(+)/H(+) antiporter NhaA 2 from Mycobacterium sp. (strain MCS).